Here is a 124-residue protein sequence, read N- to C-terminus: MACTFEQILETIENLTVKELNELVKLFEEKFDVSAQPTVVAGAAGGAAGGAGEEKTEFDVILKDAGAKKINVIKVVRQITGAGLKEAKEIVDGAPSTIKEAVSKEEAEEIKKQLEEAGATVEVK.

This sequence belongs to the bacterial ribosomal protein bL12 family. As to quaternary structure, homodimer. Part of the ribosomal stalk of the 50S ribosomal subunit. Forms a multimeric L10(L12)X complex, where L10 forms an elongated spine to which 2 to 4 L12 dimers bind in a sequential fashion. Binds GTP-bound translation factors.

Forms part of the ribosomal stalk which helps the ribosome interact with GTP-bound translation factors. Is thus essential for accurate translation. This Nautilia profundicola (strain ATCC BAA-1463 / DSM 18972 / AmH) protein is Large ribosomal subunit protein bL12.